Reading from the N-terminus, the 572-residue chain is Phosphoglucomutase-2 (572 aa).

Substrate-binding positions include Thr-23, Arg-27, 126 to 127 (SH), and Lys-140. Residue Ser-126 is the Phosphoserine intermediate of the active site. A Mg(2+)-binding site is contributed by Ser-126. Mg(2+)-binding residues include Asp-308, Asp-310, and Asp-312. Substrate-binding positions include 312-313 (DR), Thr-373, 392-394 (EES), Lys-405, and Arg-527.

The protein belongs to the phosphohexose mutase family. Mg(2+) is required as a cofactor. Phosphorylated via a calcium-dependent protein kinase.

It localises to the cytoplasm. It catalyses the reaction alpha-D-glucose 1-phosphate = alpha-D-glucose 6-phosphate. Its function is as follows. May be involved in membrane fusion in exocytosis. This Paramecium tetraurelia protein is Phosphoglucomutase-2 (pp63-2).